The chain runs to 287 residues: Xyloglucan endotransglucosylase protein 1 (287 aa).

A signal peptide spans 1–28 (MAFMSFINGFSTLFLVALLASSMMAAKG). The 191-residue stretch at 29 to 219 (GNFYQDFDVT…WTKAPFTAYY (191 aa)) folds into the GH16 domain. The Nucleophile role is filled by Glu105. Glu109 functions as the Proton donor in the catalytic mechanism. Residue Glu109 coordinates xyloglucan. Residue Asn113 is glycosylated (N-linked (GlcNAc...) asparagine). Residues 122–124 (HTN), 132–134 (NRE), 198–199 (DW), and Gly203 contribute to the xyloglucan site. Intrachain disulfides connect Cys227–Cys231 and Cys266–Cys280. A xyloglucan-binding site is contributed by Arg271.

This sequence belongs to the glycosyl hydrolase 16 family. XTH group 2 subfamily. In terms of processing, contains at least one intrachain disulfide bond essential for its enzymatic activity. As to expression, expressed in fruit pulp. Expressed in leaves, flowers, calyces, stems and fruits. Highest expression in leaves and lowest in fruits.

Its subcellular location is the secreted. It is found in the cell wall. The protein resides in the extracellular space. The protein localises to the apoplast. It catalyses the reaction breaks a beta-(1-&gt;4) bond in the backbone of a xyloglucan and transfers the xyloglucanyl segment on to O-4 of the non-reducing terminal glucose residue of an acceptor, which can be a xyloglucan or an oligosaccharide of xyloglucan.. Catalyzes xyloglucan endotransglycosylation (XET). Cleaves and religates xyloglucan polymers. Does not catalyze xyloglucan endohydrolysis (XEH). Overexpression in Arabidopsis transgenic plants results in elevated tolerance to abiotic stress, such as salt, ABA (abscisic acid) and drought stresses, and in the production of wider leaves. Overexpression in transgenic tomato plants slows down fruit ripening and softening, and the plants produce larger fruits. Both transgenic plants have larger and more irregular cells. Moreover, the fruits of the transgenic tomato have higher density of cell wall and intercellular spaces. May provide cells with more strength and thickness to maintain structural integrity. Probably involved in cell wall assembly and synthesis in fast growing tissues and in the maintenance of firmness in mature fruits. The sequence is that of Xyloglucan endotransglucosylase protein 1 from Diospyros kaki (Kaki persimmon).